The chain runs to 55 residues: Conotoxin Cal22d (55 aa).

A propeptide spanning residues 1–5 (GRPSA) is cleaved from the precursor.

Post-translationally, contains 4 disulfide bonds. In terms of tissue distribution, expressed by the venom duct.

It is found in the secreted. Probable neurotoxin with unknown target. Possibly targets ion channels. In Californiconus californicus (California cone), this protein is Conotoxin Cal22d.